A 161-amino-acid polypeptide reads, in one-letter code: Cyclic pyranopterin monophosphate synthase (161 aa).

Substrate contacts are provided by residues 78-80 and 116-117; these read LCH and ME. D131 is a catalytic residue.

Belongs to the MoaC family. Homohexamer; trimer of dimers.

It catalyses the reaction (8S)-3',8-cyclo-7,8-dihydroguanosine 5'-triphosphate = cyclic pyranopterin phosphate + diphosphate. It participates in cofactor biosynthesis; molybdopterin biosynthesis. Functionally, catalyzes the conversion of (8S)-3',8-cyclo-7,8-dihydroguanosine 5'-triphosphate to cyclic pyranopterin monophosphate (cPMP). The chain is Cyclic pyranopterin monophosphate synthase from Bordetella parapertussis (strain 12822 / ATCC BAA-587 / NCTC 13253).